Here is a 116-residue protein sequence, read N- to C-terminus: MNLTEQRCTACRPDAPRVGAAEIAELHPQIPAWRIVEIEGTPRLERQFRLRDFREAIAFTVRVGEEAEAEGHHPALLTEWGSVKVSWWTHAIAGLHRNDFVMAAKTDAIAAQVGAV.

This sequence belongs to the pterin-4-alpha-carbinolamine dehydratase family.

It carries out the reaction (4aS,6R)-4a-hydroxy-L-erythro-5,6,7,8-tetrahydrobiopterin = (6R)-L-erythro-6,7-dihydrobiopterin + H2O. In Gloeobacter violaceus (strain ATCC 29082 / PCC 7421), this protein is Putative pterin-4-alpha-carbinolamine dehydratase 1.